The following is a 122-amino-acid chain: Large ribosomal subunit protein uL14 (122 aa).

It belongs to the universal ribosomal protein uL14 family. In terms of assembly, part of the 50S ribosomal subunit. Forms a cluster with proteins L3 and L19. In the 70S ribosome, L14 and L19 interact and together make contacts with the 16S rRNA in bridges B5 and B8.

Its function is as follows. Binds to 23S rRNA. Forms part of two intersubunit bridges in the 70S ribosome. The protein is Large ribosomal subunit protein uL14 of Clostridium perfringens (strain ATCC 13124 / DSM 756 / JCM 1290 / NCIMB 6125 / NCTC 8237 / Type A).